The sequence spans 707 residues: MSTLDLFASPTPAPMPPASVIERIAALRAELDLHAHRYYVLDEPSIPDAEYDRLFKELQALEAAHPELLTPDSPTQRVGGKPLGQFASVRHRIPMLSIRTETDTEATGARNFDTRVRKELGLKESDPPVEYVAELKFDGLAMSLRYENGVLVQAATRGDGEVGEDVTQNIRTIRQIPLRLPADAPPVMEVRGEVYMRRDEFEALNERQREKIAKGAKGEKTFVNPRNAAAGGVRQLDPAFAAERRLSFFAYGVGEITPPEEGGPVFETHFELLQTLKSWCFPVAAQTRLAYGAPELIAFHEAIGRQRDQLPYDIDGVVYKVNSLALQRKMGFVSREPRWAVAHKYPAQEQLTTVLAIDIQVGRTGKLTPVAKLAPVFVGGVTVTNATLHNEDEARRKDVRVGDTVIVRRAGDVIPEVVSVLLDKRVQDAPQFSMPRQCPVCGSDAVREEGEADYRCTGGLFCAAQRKEAILHYAHKRAVEIEGLGDKLVEQLVDTGVIRTLPDLYRLGFTSLASLDRMAEKSASNLVAALEKSKQTTLPRFVFGLGIRHVGEATAKALARHFGQLDSIMDASEEQLLEVADVGPIVAKSIRTFFEQPHNREVVEQLRACGVTWEEGAPAAVAPKPLSGKTFVITGTLPGLSRDDAKDRIEAAGGKVAGSVSKKTDYVVAGLDAGSKLVKAEALGVAVIDEATLLALLDSPPDERIPA.

Residues 48–52 (DAEYD), 97–98 (SI), and E134 contribute to the NAD(+) site. The active-site N6-AMP-lysine intermediate is K136. NAD(+) contacts are provided by R157, E193, K320, and K344. Residues C438, C441, C456, and C462 each coordinate Zn(2+). The region spanning 621–707 (VAPKPLSGKT…DSPPDERIPA (87 aa)) is the BRCT domain.

Belongs to the NAD-dependent DNA ligase family. LigA subfamily. It depends on Mg(2+) as a cofactor. Mn(2+) serves as cofactor.

The catalysed reaction is NAD(+) + (deoxyribonucleotide)n-3'-hydroxyl + 5'-phospho-(deoxyribonucleotide)m = (deoxyribonucleotide)n+m + AMP + beta-nicotinamide D-nucleotide.. Its function is as follows. DNA ligase that catalyzes the formation of phosphodiester linkages between 5'-phosphoryl and 3'-hydroxyl groups in double-stranded DNA using NAD as a coenzyme and as the energy source for the reaction. It is essential for DNA replication and repair of damaged DNA. The protein is DNA ligase of Polaromonas naphthalenivorans (strain CJ2).